Reading from the N-terminus, the 343-residue chain is Probable 4-hydroxy-tetrahydrodipicolinate reductase 1, chloroplastic (343 aa).

A chloroplast-targeting transit peptide spans 1–14; it reads MLASTFATHPAAAA. NAD(+)-binding positions include 167-169 and 190-193; these read GTT and SPQM. The Proton donor/acceptor role is filled by His-226. Lys-230 (proton donor) is an active-site residue. 235–236 contacts (S)-2,3,4,5-tetrahydrodipicolinate; the sequence is GT.

The protein belongs to the DapB family.

The protein localises to the plastid. Its subcellular location is the chloroplast. It catalyses the reaction (S)-2,3,4,5-tetrahydrodipicolinate + NAD(+) + H2O = (2S,4S)-4-hydroxy-2,3,4,5-tetrahydrodipicolinate + NADH + H(+). It carries out the reaction (S)-2,3,4,5-tetrahydrodipicolinate + NADP(+) + H2O = (2S,4S)-4-hydroxy-2,3,4,5-tetrahydrodipicolinate + NADPH + H(+). The protein operates within amino-acid biosynthesis; L-lysine biosynthesis via DAP pathway; (S)-tetrahydrodipicolinate from L-aspartate: step 4/4. Catalyzes the conversion of 4-hydroxy-tetrahydrodipicolinate (HTPA) to tetrahydrodipicolinate. This chain is Probable 4-hydroxy-tetrahydrodipicolinate reductase 1, chloroplastic (DAPB1), found in Oryza sativa subsp. japonica (Rice).